We begin with the raw amino-acid sequence, 232 residues long: 5'-methylthioadenosine/S-adenosylhomocysteine nucleosidase (232 aa).

Residue Glu12 is the Proton acceptor of the active site. Substrate-binding positions include Gly78, Val152, and 173–174; that span reads ME. The active-site Proton donor is Asp197.

Belongs to the PNP/UDP phosphorylase family. MtnN subfamily. Homodimer.

It catalyses the reaction S-adenosyl-L-homocysteine + H2O = S-(5-deoxy-D-ribos-5-yl)-L-homocysteine + adenine. It carries out the reaction S-methyl-5'-thioadenosine + H2O = 5-(methylsulfanyl)-D-ribose + adenine. The catalysed reaction is 5'-deoxyadenosine + H2O = 5-deoxy-D-ribose + adenine. It participates in amino-acid biosynthesis; L-methionine biosynthesis via salvage pathway; S-methyl-5-thio-alpha-D-ribose 1-phosphate from S-methyl-5'-thioadenosine (hydrolase route): step 1/2. Functionally, catalyzes the irreversible cleavage of the glycosidic bond in both 5'-methylthioadenosine (MTA) and S-adenosylhomocysteine (SAH/AdoHcy) to adenine and the corresponding thioribose, 5'-methylthioribose and S-ribosylhomocysteine, respectively. Also cleaves 5'-deoxyadenosine, a toxic by-product of radical S-adenosylmethionine (SAM) enzymes, into 5-deoxyribose and adenine. Thus, is required for in vivo function of the radical SAM enzymes biotin synthase and lipoic acid synthase, that are inhibited by 5'-deoxyadenosine accumulation. The sequence is that of 5'-methylthioadenosine/S-adenosylhomocysteine nucleosidase from Buchnera aphidicola subsp. Acyrthosiphon pisum (strain APS) (Acyrthosiphon pisum symbiotic bacterium).